A 123-amino-acid chain; its full sequence is Small ribosomal subunit protein uS12 (123 aa).

A disordered region spans residues 1–30; that stretch reads MPTIQQLIRKPRQPKIKRSKSQHMEGCPQK. The segment covering 9 to 21 has biased composition (basic residues); that stretch reads RKPRQPKIKRSKS. Position 89 is a 3-methylthioaspartic acid (D89). The interval 104 to 123 is disordered; that stretch reads TQGVKDRRQRRSKYGAKRPK. The span at 110–123 shows a compositional bias: basic residues; it reads RRQRRSKYGAKRPK.

The protein belongs to the universal ribosomal protein uS12 family. In terms of assembly, part of the 30S ribosomal subunit. Contacts proteins S8 and S17. May interact with IF1 in the 30S initiation complex.

Functionally, with S4 and S5 plays an important role in translational accuracy. In terms of biological role, interacts with and stabilizes bases of the 16S rRNA that are involved in tRNA selection in the A site and with the mRNA backbone. Located at the interface of the 30S and 50S subunits, it traverses the body of the 30S subunit contacting proteins on the other side and probably holding the rRNA structure together. The combined cluster of proteins S8, S12 and S17 appears to hold together the shoulder and platform of the 30S subunit. The polypeptide is Small ribosomal subunit protein uS12 (Jannaschia sp. (strain CCS1)).